A 931-amino-acid polypeptide reads, in one-letter code: MPRAPHSMPLLLLLLLLSSLPQAQAAFPQDPTPLLTSDLQGASPSSWFRGLEDDAVAAELGLDFQRFLTLNRTLLVAARDHVFSFDLQAQEEGEGLVPNKFLTWRSQDMENCAVRGKLTDECYNYIRVLVPWNSQTLLACGTNSFSPMCRSYGITSLQQEGEELSGQARCPFDATQSTVAIFAEGSLYSATAADFQASDAVVYRSLGPQPPLRSAKYDSKWLREPHFVYALEHGEHVYFFFREVSVEDARLGRVQFSRVARVCKRDMGGSPRALDRHWTSFLKLRLNCSVPGDSTFYFDVLQSLTGPVNLHGRSALFGVFTTQTNSIPGSAVCAFYLDDIERGFEGKFKEQRSLDGAWTPVSEDKVPSPRPGSCAGVGAAASFSSSQDLPDDVLLFIKAHPLLDPAVPPATHQPLLTLTSRALLTQVAVDGMAGPHRNTTVLFLGSNDGTVLKVLPPGGQSLGSEPIVLEEIDAYSHARCSGKRSPRAARRIIGLELDTEGHRLFVAFPGCIVYLSLSRCARHGACQRSCLASLDPYCGWHRSRGCMSIRGPGGTDVDLTGNQESTEHGDCQDGATGSQSGPGDSAYGVRRDLSPASASRSIPIPLLLACVAAAFALGASVSGLLVSCACRRANRRRSKDIETPGLPRPLSLRSLARLHGGGPEPPPPPKDGDAAQTPQLYTTFLPPPDGGSPPELACLPTPETTPELPVKHLRASGGPWEWNQNGNNASEGPGRPPRGCSGAGGPAPRVLVRPPPPGCPGQAVEVTTLEELLRYLHGPQPPRKGSEPLASAPFTSRPPASEPGASLFVDSSPMPRDGVPPLRLDVPPEGKRAAPSGRPALSAPAPRLGVGGSRRLPFPTHRAPPGLLTRVPSGGPARYSGGPGRHLLYLGRPEGHRGRSLKRVDVKSPLSPKPPLASPPQPAPHGGHFNF.

An N-terminal signal peptide occupies residues 1-25 (MPRAPHSMPLLLLLLLLSSLPQAQA). At 26–605 (AFPQDPTPLL…ASASRSIPIP (580 aa)) the chain is on the extracellular side. The Sema domain maps to 31–517 (PTPLLTSDLQ…FPGCIVYLSL (487 aa)). N71 carries an N-linked (GlcNAc...) asparagine glycan. Cystine bridges form between C112-C122, C140-C149, C263-C374, and C288-C333. N-linked (GlcNAc...) asparagine glycosylation occurs at N287. An N-linked (GlcNAc...) asparagine glycan is attached at N438. Disulfide bonds link C480–C511, C520–C538, C526–C571, and C530–C546. Residues 556-591 (DVDLTGNQESTEHGDCQDGATGSQSGPGDSAYGVRR) are disordered. The chain crosses the membrane as a helical span at residues 606–626 (LLLACVAAAFALGASVSGLLV). At 627-931 (SCACRRANRR…PAPHGGHFNF (305 aa)) the chain is on the cytoplasmic side. 2 disordered regions span residues 655–747 (LARL…GGPA) and 777–931 (HGPQ…HFNF). Positions 693–708 (PPELACLPTPETTPEL) are enriched in low complexity. The segment covering 893-906 (PEGHRGRSLKRVDV) has biased composition (basic and acidic residues). Residues 911-923 (SPKPPLASPPQPA) show a composition bias toward pro residues.

It belongs to the semaphorin family.

It is found in the cell membrane. Its function is as follows. May be a stop signal for the dorsal root ganglion neurons in their target areas, and possibly also for other neurons. May also be involved in the maintenance and remodeling of neuronal connections. The protein is Semaphorin-6C (Sema6c) of Mus musculus (Mouse).